The chain runs to 75 residues: UPF0729 protein C18orf32 homolog (75 aa).

Residues 1-37 (MVCIPCIVIPVLLWVYKRFLEPVLYPIISPIISRFWR) are necessary for its localzation to the endoplasmic reticulum and lipid droplets. Residues 43–65 (DTPQQKTSTAECNGAANGSTANG) show a composition bias toward polar residues. The segment at 43–75 (DTPQQKTSTAECNGAANGSTANGPKTVADKKAD) is disordered.

It belongs to the UPF0729 family.

The protein localises to the endoplasmic reticulum. It localises to the lipid droplet. In Danio rerio (Zebrafish), this protein is UPF0729 protein C18orf32 homolog.